The sequence spans 260 residues: Salicylic acid-binding protein 2 (260 aa).

Salicylate contacts are provided by Ala-13, Ser-81, and Lys-159. Residue Ser-81 is the Acyl-ester intermediate of the active site. Residues Asp-210 and His-238 each act as charge relay system in the active site. Salicylate-binding residues include His-238, Leu-253, and His-257.

The protein belongs to the AB hydrolase superfamily. Methylesterase family.

It catalyses the reaction methyl salicylate + H2O = salicylate + methanol + H(+). It functions in the pathway plant hormone biosynthesis. Its activity is regulated as follows. Esterase activity is down-regulated by salicylic acid (SA) or by tetraFA, a synthetic SA analog. Required to convert methyl salicylate (MeSA) to salicylic acid (SA) as part of the signal transduction pathways that activate systemic acquired resistance in systemic tissue. MeSA is believed to be an inactive form that needs to be demethylated to exert a biological effect. Also able to catalyze the conversion of acibenzolar-S-methyl into acibenzolar to induce systemic acquired resistance. This Nicotiana tabacum (Common tobacco) protein is Salicylic acid-binding protein 2.